A 412-amino-acid chain; its full sequence is Multifunctional CCA protein (412 aa).

ATP contacts are provided by Gly-8 and Arg-11. Gly-8 and Arg-11 together coordinate CTP. Positions 21 and 23 each coordinate Mg(2+). Positions 91, 137, and 140 each coordinate ATP. Residues Arg-91, Arg-137, and Arg-140 each contribute to the CTP site. In terms of domain architecture, HD spans 228–329 (TGIHTMMVLA…LKVFDKADAW (102 aa)).

This sequence belongs to the tRNA nucleotidyltransferase/poly(A) polymerase family. Bacterial CCA-adding enzyme type 1 subfamily. Monomer. Can also form homodimers and oligomers. Mg(2+) is required as a cofactor. The cofactor is Ni(2+).

The enzyme catalyses a tRNA precursor + 2 CTP + ATP = a tRNA with a 3' CCA end + 3 diphosphate. The catalysed reaction is a tRNA with a 3' CCA end + 2 CTP + ATP = a tRNA with a 3' CCACCA end + 3 diphosphate. Its function is as follows. Catalyzes the addition and repair of the essential 3'-terminal CCA sequence in tRNAs without using a nucleic acid template. Adds these three nucleotides in the order of C, C, and A to the tRNA nucleotide-73, using CTP and ATP as substrates and producing inorganic pyrophosphate. tRNA 3'-terminal CCA addition is required both for tRNA processing and repair. Also involved in tRNA surveillance by mediating tandem CCA addition to generate a CCACCA at the 3' terminus of unstable tRNAs. While stable tRNAs receive only 3'-terminal CCA, unstable tRNAs are marked with CCACCA and rapidly degraded. This chain is Multifunctional CCA protein, found in Aeromonas hydrophila subsp. hydrophila (strain ATCC 7966 / DSM 30187 / BCRC 13018 / CCUG 14551 / JCM 1027 / KCTC 2358 / NCIMB 9240 / NCTC 8049).